The sequence spans 295 residues: Ribosome production factor 1 (295 aa).

A disordered region spans residues 24 to 47; it reads HEKNKERHTMRRKRAKEERENPEL. A compositionally biased stretch (basic and acidic residues) spans 38–47; the sequence is AKEERENPEL. Residues 93–276 enclose the Brix domain; sequence PKIFLTTNVN…LKRLQRGIKE (184 aa). An RNA-binding region spans residues 254–271; the sequence is VGLQELGPQFTLKLKRLQ.

As to quaternary structure, part of a complex that includes BRX1, RPF1, RPF2 and SSF1 or SSF2.

The protein resides in the nucleus. The protein localises to the nucleolus. Essential protein. Required for biogenesis of the 60S ribosomal subunit. The sequence is that of Ribosome production factor 1 (RPF1) from Saccharomyces cerevisiae (strain ATCC 204508 / S288c) (Baker's yeast).